Reading from the N-terminus, the 485-residue chain is UDP-N-acetylmuramoyl-L-alanyl-D-glutamate--2,6-diaminopimelate ligase (485 aa).

Residues L27 and S29 each contribute to the UDP-N-acetyl-alpha-D-muramoyl-L-alanyl-D-glutamate site. Residue 106–112 coordinates ATP; the sequence is GTSGKTS. UDP-N-acetyl-alpha-D-muramoyl-L-alanyl-D-glutamate is bound by residues 148–149, S175, Q181, and R183; that span reads TT. N6-carboxylysine is present on K215. Residues R382, 406–409, G454, and E458 each bind meso-2,6-diaminopimelate; that span reads DNPR. Residues 406-409 carry the Meso-diaminopimelate recognition motif motif; it reads DNPR.

This sequence belongs to the MurCDEF family. MurE subfamily. It depends on Mg(2+) as a cofactor. In terms of processing, carboxylation is probably crucial for Mg(2+) binding and, consequently, for the gamma-phosphate positioning of ATP.

It localises to the cytoplasm. The enzyme catalyses UDP-N-acetyl-alpha-D-muramoyl-L-alanyl-D-glutamate + meso-2,6-diaminopimelate + ATP = UDP-N-acetyl-alpha-D-muramoyl-L-alanyl-gamma-D-glutamyl-meso-2,6-diaminopimelate + ADP + phosphate + H(+). The protein operates within cell wall biogenesis; peptidoglycan biosynthesis. Its function is as follows. Catalyzes the addition of meso-diaminopimelic acid to the nucleotide precursor UDP-N-acetylmuramoyl-L-alanyl-D-glutamate (UMAG) in the biosynthesis of bacterial cell-wall peptidoglycan. This chain is UDP-N-acetylmuramoyl-L-alanyl-D-glutamate--2,6-diaminopimelate ligase, found in Bradyrhizobium diazoefficiens (strain JCM 10833 / BCRC 13528 / IAM 13628 / NBRC 14792 / USDA 110).